Reading from the N-terminus, the 426-residue chain is Serine--tRNA ligase (426 aa).

233 to 235 (TAE) lines the L-serine pocket. 264-266 (RSE) lines the ATP pocket. E287 serves as a coordination point for L-serine. An ATP-binding site is contributed by 351-354 (EISS). S387 contributes to the L-serine binding site.

The protein belongs to the class-II aminoacyl-tRNA synthetase family. Type-1 seryl-tRNA synthetase subfamily. Homodimer. The tRNA molecule binds across the dimer.

It localises to the cytoplasm. It catalyses the reaction tRNA(Ser) + L-serine + ATP = L-seryl-tRNA(Ser) + AMP + diphosphate + H(+). It carries out the reaction tRNA(Sec) + L-serine + ATP = L-seryl-tRNA(Sec) + AMP + diphosphate + H(+). The protein operates within aminoacyl-tRNA biosynthesis; selenocysteinyl-tRNA(Sec) biosynthesis; L-seryl-tRNA(Sec) from L-serine and tRNA(Sec): step 1/1. Functionally, catalyzes the attachment of serine to tRNA(Ser). Is also able to aminoacylate tRNA(Sec) with serine, to form the misacylated tRNA L-seryl-tRNA(Sec), which will be further converted into selenocysteinyl-tRNA(Sec). The polypeptide is Serine--tRNA ligase (Pseudomonas putida (strain W619)).